A 614-amino-acid chain; its full sequence is UvrABC system protein C (614 aa).

A GIY-YIG domain is found at 16 to 94; it reads SRPGVYRMFG…VKSLKPRFNV (79 aa). The UVR domain maps to 204–239; sequence GELQKRLASEMEAASEAMEFETAARLRDRIRAIAHV.

Belongs to the UvrC family. In terms of assembly, interacts with UvrB in an incision complex.

It localises to the cytoplasm. Functionally, the UvrABC repair system catalyzes the recognition and processing of DNA lesions. UvrC both incises the 5' and 3' sides of the lesion. The N-terminal half is responsible for the 3' incision and the C-terminal half is responsible for the 5' incision. The protein is UvrABC system protein C of Hyphomonas neptunium (strain ATCC 15444).